A 412-amino-acid chain; its full sequence is D-amino acid dehydrogenase 3 (412 aa).

4–18 (IVVIGAGIAGVSTAY) provides a ligand contact to FAD.

Belongs to the DadA oxidoreductase family. FAD serves as cofactor.

The catalysed reaction is a D-alpha-amino acid + A + H2O = a 2-oxocarboxylate + AH2 + NH4(+). Oxidative deamination of D-amino acids. This Mesorhizobium japonicum (strain LMG 29417 / CECT 9101 / MAFF 303099) (Mesorhizobium loti (strain MAFF 303099)) protein is D-amino acid dehydrogenase 3 (dadA3).